The sequence spans 535 residues: Cytochrome P450 monooxygenase claQ (535 aa).

2 consecutive transmembrane segments (helical) span residues 7–27 (IGTW…KLVG) and 225–245 (YFAI…NLPT). Cys-472 serves as a coordination point for heme.

Belongs to the cytochrome P450 family. It depends on heme as a cofactor.

It localises to the membrane. The protein operates within secondary metabolite biosynthesis; terpenoid biosynthesis. Cytochrome P450 monooxygenase; part of the gene cluster that mediates the biosynthesis of clavilactone A, a meroterpenoid that features a unique benzo-fused ten-membered carbocyclic ring unit with an alpha,beta-epoxy-gamma-lactone moiety, forming an intriguing 10/5/3 tricyclic nested skeleton. Cytochrome P450 monooxygenases claO, claP, claQ, claU, and claW are close orthologs, suggesting that a redundant function or pseudogenes are present in the cla cluster. These monoxygenases are not involved in clavilactone A biosynthesis nor its modification. ClaR, ClaS and ClaT are sufficient to produce clavilactone A. The biosynthesis begins with the prenyltransferase claS that transfers geranyl pyrophosphate (GPP) to hydroquinone to produces geranylhydroquinone. The cytochrome P450 monooxygenase claR then catalyzes the diradical coupling reaction between the intramolecular hydroquinone and allyl moieties to form the benzo-fused ten-membered carbocyclic ring unit of wigantol. Finally the cytochrome P450 monooxygenase claT exquisitely and stereoselectively assembles the alpha,beta-epoxy-gamma-lactone moiety, producing clavilactone A via arnebinol A. This is Cytochrome P450 monooxygenase claQ from Ampulloclitocybe clavipes (Club foot).